The following is a 247-amino-acid chain: Cell division protein ZapD (247 aa).

Belongs to the ZapD family. In terms of assembly, interacts with FtsZ.

It is found in the cytoplasm. Functionally, cell division factor that enhances FtsZ-ring assembly. Directly interacts with FtsZ and promotes bundling of FtsZ protofilaments, with a reduction in FtsZ GTPase activity. This chain is Cell division protein ZapD, found in Escherichia coli O17:K52:H18 (strain UMN026 / ExPEC).